Here is a 229-residue protein sequence, read N- to C-terminus: NAD(P)H-quinone oxidoreductase subunit K, chloroplastic (229 aa).

[4Fe-4S] cluster is bound by residues C43, C44, C108, and C139.

It belongs to the complex I 20 kDa subunit family. In terms of assembly, NDH is composed of at least 16 different subunits, 5 of which are encoded in the nucleus. [4Fe-4S] cluster serves as cofactor.

The protein localises to the plastid. It localises to the chloroplast thylakoid membrane. The catalysed reaction is a plastoquinone + NADH + (n+1) H(+)(in) = a plastoquinol + NAD(+) + n H(+)(out). It catalyses the reaction a plastoquinone + NADPH + (n+1) H(+)(in) = a plastoquinol + NADP(+) + n H(+)(out). Its function is as follows. NDH shuttles electrons from NAD(P)H:plastoquinone, via FMN and iron-sulfur (Fe-S) centers, to quinones in the photosynthetic chain and possibly in a chloroplast respiratory chain. The immediate electron acceptor for the enzyme in this species is believed to be plastoquinone. Couples the redox reaction to proton translocation, and thus conserves the redox energy in a proton gradient. The protein is NAD(P)H-quinone oxidoreductase subunit K, chloroplastic of Piper cenocladum (Ant piper).